A 249-amino-acid chain; its full sequence is tRNA (guanine-N(1)-)-methyltransferase (249 aa).

S-adenosyl-L-methionine-binding positions include glycine 113 and 133 to 138; that span reads VGDYVL.

It belongs to the RNA methyltransferase TrmD family. As to quaternary structure, homodimer.

It localises to the cytoplasm. The enzyme catalyses guanosine(37) in tRNA + S-adenosyl-L-methionine = N(1)-methylguanosine(37) in tRNA + S-adenosyl-L-homocysteine + H(+). Functionally, specifically methylates guanosine-37 in various tRNAs. The polypeptide is tRNA (guanine-N(1)-)-methyltransferase (Tolumonas auensis (strain DSM 9187 / NBRC 110442 / TA 4)).